The following is a 229-amino-acid chain: Small ribosomal subunit protein uS2c (229 aa).

The protein belongs to the universal ribosomal protein uS2 family.

Its subcellular location is the plastid. The protein resides in the chloroplast. The chain is Small ribosomal subunit protein uS2c (rps2) from Emiliania huxleyi (Coccolithophore).